A 255-amino-acid polypeptide reads, in one-letter code: Malonyl-[acyl-carrier protein] O-methyltransferase (255 aa).

The protein belongs to the methyltransferase superfamily.

It carries out the reaction malonyl-[ACP] + S-adenosyl-L-methionine = malonyl-[ACP] methyl ester + S-adenosyl-L-homocysteine. Its pathway is cofactor biosynthesis; biotin biosynthesis. Functionally, converts the free carboxyl group of a malonyl-thioester to its methyl ester by transfer of a methyl group from S-adenosyl-L-methionine (SAM). It allows to synthesize pimeloyl-ACP via the fatty acid synthetic pathway. The protein is Malonyl-[acyl-carrier protein] O-methyltransferase of Acinetobacter baylyi (strain ATCC 33305 / BD413 / ADP1).